The sequence spans 390 residues: MPELPEVEAARRAIEENCLGKKIKRVIIADDNKVIHGISPSDFQTSILGKTIISARRKGKNLWLELDSPPFPSFQFGMAGAIYIKGVAVTKYKRSAVKDSEEWPSKYSKFFVELDDGLELSFTDKRRFAKVRLLANPTSVSPISELGPDALLEPMTVDEFAESLAKKKITIKPLLLDQGYISGIGNWIADEVLYQARIHPLQTASSLSKEQCEALHTSIKEVIEKAVEVDADSSQFPSYWIFHNREKKPGKAFVDGKKIDFITAGGRTTAYVPELQKLYGKDAEKAAKVRPAKRGVKPKEDDGDGEEDEQETEKEDESAKSKKGQKPRGGRGKKPASKTKTEESDDDGDDSEAEEEVVKPKGRGTKPAIKRKSEEKATSQAGKKPKGRKS.

Catalysis depends on P2, which acts as the Schiff-base intermediate with DNA. E3 (proton donor) is an active-site residue. Catalysis depends on K60, which acts as the Proton donor; for beta-elimination activity. Residues Y107, R126, K167, and N186 each contribute to the DNA site. Positions 283 to 390 (AEKAAKVRPA…AGKKPKGRKS (108 aa)) are disordered. The segment covering 301–316 (DDGDGEEDEQETEKED) has biased composition (acidic residues). Over residues 321-337 (SKKGQKPRGGRGKKPAS) the composition is skewed to basic residues. A compositionally biased stretch (acidic residues) spans 343–355 (ESDDDGDDSEAEE). Over residues 360–370 (PKGRGTKPAIK) the composition is skewed to basic residues.

The protein belongs to the FPG family. In terms of assembly, monomer. In terms of tissue distribution, expressed in leaves (at protein levels).

Its subcellular location is the nucleus. The enzyme catalyses Hydrolysis of DNA containing ring-opened 7-methylguanine residues, releasing 2,6-diamino-4-hydroxy-5-(N-methyl)formamidopyrimidine.. The catalysed reaction is 2'-deoxyribonucleotide-(2'-deoxyribose 5'-phosphate)-2'-deoxyribonucleotide-DNA = a 3'-end 2'-deoxyribonucleotide-(2,3-dehydro-2,3-deoxyribose 5'-phosphate)-DNA + a 5'-end 5'-phospho-2'-deoxyribonucleoside-DNA + H(+). Involved in base excision repair of DNA damaged by oxidation or by mutagenic agents. Acts as a DNA glycosylase that recognizes and removes damaged bases. Can process efficiently 4,6-diamino-5-formamidopyrimidine (FapyA), 2,6-diamino-4- hydroxy-5-formamidopyrimidine (FapyG) and the further oxidation products of 8-oxoguanine (8-oxoG), such as guanidinohydantoin and spiroiminodihydantoin. Has marginal activity towards 8-oxoG. Has AP (apurinic/apyrimidinic) lyase activity. Cleaves the DNA backbone by beta-delta elimination to generate a single-strand break at the site of the removed base with both 3'- and 5'-phosphates. The polypeptide is Formamidopyrimidine-DNA glycosylase (FPG1) (Arabidopsis thaliana (Mouse-ear cress)).